A 411-amino-acid chain; its full sequence is uncharacterized protein (411 aa).

Disordered stretches follow at residues 1–91 (METP…QDEE) and 253–280 (KGPL…AYSP). Residues 46 to 57 (ETTESADSENDM) are compositionally biased toward acidic residues. Positions 74–86 (SNESFSSNQSTES) are enriched in low complexity. The span at 258-272 (RRNEEDENKPQEKRP) shows a compositional bias: basic and acidic residues. Position 279 is a phosphoserine (serine 279).

In terms of tissue distribution, widely expressed, highest levels in cerebellum, brain cortex, hippocampus, pons, putamen and amygdala. Highly expressed in neurons, but also present in glial cells. Slightly higher expression in the dorsolateral prefrontal cortex of schizophrenic patients compared to control individuals.

The protein resides in the cytoplasm. This is an uncharacterized protein from Homo sapiens (Human).